The following is a 67-amino-acid chain: Small ribosomal subunit protein bS21 (67 aa).

The protein belongs to the bacterial ribosomal protein bS21 family.

In Nitratidesulfovibrio vulgaris (strain DP4) (Desulfovibrio vulgaris), this protein is Small ribosomal subunit protein bS21.